The primary structure comprises 200 residues: Recombination protein RecR (200 aa).

The segment at 59–74 adopts a C4-type zinc-finger fold; the sequence is CEICGNIDTRSPCTVC. A Toprim domain is found at 82–177; it reads SIIVVVADVA…KVTRLAHGVP (96 aa).

This sequence belongs to the RecR family.

May play a role in DNA repair. It seems to be involved in an RecBC-independent recombinational process of DNA repair. It may act with RecF and RecO. The polypeptide is Recombination protein RecR (Nitrobacter hamburgensis (strain DSM 10229 / NCIMB 13809 / X14)).